Reading from the N-terminus, the 215-residue chain is Protein Ac34 (215 aa).

Interacts with host proteins P40, P34 ands P20.

It is found in the host nucleus. Its function is as follows. Plays a role in the translocation of the P40 subunit of host Arp2/3 to the nucleus. The robust nuclear accumulation of Arp2/3 induces nuclear actin polymerization to assist in virus replication. Mechanistically, subverts the host CRM1-dependent nuclear export pathway leading to Arp2/3 acumulation in the host nucleus. This Autographa californica nuclear polyhedrosis virus (AcMNPV) protein is Protein Ac34 (Ac34).